Consider the following 89-residue polypeptide: Small ribosomal subunit protein uS15 (89 aa).

It belongs to the universal ribosomal protein uS15 family. Part of the 30S ribosomal subunit. Forms a bridge to the 50S subunit in the 70S ribosome, contacting the 23S rRNA.

Functionally, one of the primary rRNA binding proteins, it binds directly to 16S rRNA where it helps nucleate assembly of the platform of the 30S subunit by binding and bridging several RNA helices of the 16S rRNA. Forms an intersubunit bridge (bridge B4) with the 23S rRNA of the 50S subunit in the ribosome. This chain is Small ribosomal subunit protein uS15, found in Klebsiella pneumoniae subsp. pneumoniae (strain ATCC 700721 / MGH 78578).